Here is a 149-residue protein sequence, read N- to C-terminus: Protein SprT-like (149 aa).

The 142-residue stretch at 6–147 (LQKLTEDISL…CGKCRGKIKR (142 aa)) folds into the SprT-like domain. His67 contributes to the Zn(2+) binding site. The active site involves Glu68. His71 is a Zn(2+) binding site.

Belongs to the SprT family. It depends on Zn(2+) as a cofactor.

The protein localises to the cytoplasm. This Bacillus velezensis (strain DSM 23117 / BGSC 10A6 / LMG 26770 / FZB42) (Bacillus amyloliquefaciens subsp. plantarum) protein is Protein SprT-like.